Consider the following 511-residue polypeptide: Bifunctional purine biosynthesis protein PurH (511 aa).

Positions 1 to 145 constitute an MGS-like domain; that stretch reads MKKRALVSVS…KNHKFVSVIV (145 aa).

The protein belongs to the PurH family.

The catalysed reaction is (6R)-10-formyltetrahydrofolate + 5-amino-1-(5-phospho-beta-D-ribosyl)imidazole-4-carboxamide = 5-formamido-1-(5-phospho-D-ribosyl)imidazole-4-carboxamide + (6S)-5,6,7,8-tetrahydrofolate. It carries out the reaction IMP + H2O = 5-formamido-1-(5-phospho-D-ribosyl)imidazole-4-carboxamide. Its pathway is purine metabolism; IMP biosynthesis via de novo pathway; 5-formamido-1-(5-phospho-D-ribosyl)imidazole-4-carboxamide from 5-amino-1-(5-phospho-D-ribosyl)imidazole-4-carboxamide (10-formyl THF route): step 1/1. The protein operates within purine metabolism; IMP biosynthesis via de novo pathway; IMP from 5-formamido-1-(5-phospho-D-ribosyl)imidazole-4-carboxamide: step 1/1. This chain is Bifunctional purine biosynthesis protein PurH, found in Bacillus thuringiensis (strain Al Hakam).